The following is a 179-amino-acid chain: Large ribosomal subunit protein uL5 (179 aa).

Belongs to the universal ribosomal protein uL5 family. As to quaternary structure, part of the 50S ribosomal subunit; part of the 5S rRNA/L5/L18/L25 subcomplex. Contacts the 5S rRNA and the P site tRNA. Forms a bridge to the 30S subunit in the 70S ribosome.

This is one of the proteins that bind and probably mediate the attachment of the 5S RNA into the large ribosomal subunit, where it forms part of the central protuberance. In the 70S ribosome it contacts protein S13 of the 30S subunit (bridge B1b), connecting the 2 subunits; this bridge is implicated in subunit movement. Contacts the P site tRNA; the 5S rRNA and some of its associated proteins might help stabilize positioning of ribosome-bound tRNAs. This Shewanella sp. (strain MR-4) protein is Large ribosomal subunit protein uL5.